Here is a 199-residue protein sequence, read N- to C-terminus: NAD(P)H dehydrogenase (quinone) (199 aa).

A Flavodoxin-like domain is found at 4-190 (VLVLYYSAYG…AGARYQGRVI (187 aa)). FMN contacts are provided by residues 10–15 (SAYGHI) and 78–80 (TRF). Position 12 (tyrosine 12) interacts with NAD(+). Tryptophan 98 contacts substrate. Residues 113-119 (STATQHG) and histidine 134 contribute to the FMN site.

The protein belongs to the WrbA family. FMN is required as a cofactor.

It catalyses the reaction a quinone + NADH + H(+) = a quinol + NAD(+). The enzyme catalyses a quinone + NADPH + H(+) = a quinol + NADP(+). The sequence is that of NAD(P)H dehydrogenase (quinone) from Bradyrhizobium sp. (strain BTAi1 / ATCC BAA-1182).